Here is a 233-residue protein sequence, read N- to C-terminus: Biosynthetic peptidoglycan transglycosylase (233 aa).

The chain crosses the membrane as a helical span at residues 7 to 27 (VFTWLAKLVLGLFFASILSVV).

Belongs to the glycosyltransferase 51 family.

Its subcellular location is the cell inner membrane. The enzyme catalyses [GlcNAc-(1-&gt;4)-Mur2Ac(oyl-L-Ala-gamma-D-Glu-L-Lys-D-Ala-D-Ala)](n)-di-trans,octa-cis-undecaprenyl diphosphate + beta-D-GlcNAc-(1-&gt;4)-Mur2Ac(oyl-L-Ala-gamma-D-Glu-L-Lys-D-Ala-D-Ala)-di-trans,octa-cis-undecaprenyl diphosphate = [GlcNAc-(1-&gt;4)-Mur2Ac(oyl-L-Ala-gamma-D-Glu-L-Lys-D-Ala-D-Ala)](n+1)-di-trans,octa-cis-undecaprenyl diphosphate + di-trans,octa-cis-undecaprenyl diphosphate + H(+). Its pathway is cell wall biogenesis; peptidoglycan biosynthesis. Peptidoglycan polymerase that catalyzes glycan chain elongation from lipid-linked precursors. This chain is Biosynthetic peptidoglycan transglycosylase, found in Shewanella oneidensis (strain ATCC 700550 / JCM 31522 / CIP 106686 / LMG 19005 / NCIMB 14063 / MR-1).